Reading from the N-terminus, the 206-residue chain is Na(+)-translocating NADH-quinone reductase subunit E (206 aa).

6 helical membrane passes run 12-32 (AVFVENMALAFFLGMCTFIAI), 36-56 (IQTAIGLGIAVVVVLAITVPV), 85-105 (FLGLLSYIGVIAAIVQILEMT), 118-138 (GIFLPLITVNCAIMGASLFMV), 148-168 (VVYGVGAGVGWALAITLLAGI), and 184-204 (LGITFITVGLMSLGFMSFSGV).

This sequence belongs to the NqrDE/RnfAE family. As to quaternary structure, composed of six subunits; NqrA, NqrB, NqrC, NqrD, NqrE and NqrF.

It is found in the cell inner membrane. It carries out the reaction a ubiquinone + n Na(+)(in) + NADH + H(+) = a ubiquinol + n Na(+)(out) + NAD(+). NQR complex catalyzes the reduction of ubiquinone-1 to ubiquinol by two successive reactions, coupled with the transport of Na(+) ions from the cytoplasm to the periplasm. NqrA to NqrE are probably involved in the second step, the conversion of ubisemiquinone to ubiquinol. This Alcanivorax borkumensis (strain ATCC 700651 / DSM 11573 / NCIMB 13689 / SK2) protein is Na(+)-translocating NADH-quinone reductase subunit E.